The primary structure comprises 205 residues: Protein Nef (205 aa).

A lipid anchor (N-myristoyl glycine; by host) is attached at glycine 2. At serine 6 the chain carries Phosphoserine; by host. The interval glutamate 62–glutamate 65 is acidic; interacts with host PACS1 and PACS2; stabilizes the interaction of NEF/MHC-I with host AP1M1; necessary for MHC-I internalization. An SH3-binding; interaction with Src family tyrosine kinases region spans residues proline 69–proline 78. A PxxP; stabilizes the interaction of NEF/MHC-I with host AP1M1; necessary for MHC-I internalization motif is present at residues proline 72–proline 75. The tract at residues aspartate 108–tryptophan 124 is mediates dimerization, Nef-PTE1 interaction. A binding to ATP6V1H region spans residues valine 148–valine 179. Positions leucine 163–leucine 164 match the Dileucine internalization motif; necessary for CD4 internalization motif. The Diacidic; necessary for CD4 internalization signature appears at aspartate 173–aspartate 174.

Belongs to the lentivirus primate group Nef protein family. In terms of assembly, monomer; cytosolic form. Homodimer; membrane bound form. Interacts with Nef associated p21-activated kinase (PAK2); this interaction activates PAK2. Associates with the Nef-MHC-I-AP1 complex; this complex is required for MHC-I internalization. Interacts (via C-terminus) with host PI3-kinase. Interacts with host PACS1; this interaction seems to be weak. Interacts with host PACS2. Interacts with host LCK and MAPK3; these interactions inhibit the kinase activity of the latter. Interacts with host ATP6V1H; this interaction may play a role in CD4 endocytosis. Associates with the CD4-Nef-AP2 complex; this complex is required for CD4 internalization. Interacts with host AP2 subunit alpha and AP2 subunit sigma2. Interacts with TCR-zeta chain; this interaction up-regulates the Fas ligand (FasL) surface expression. Interacts with host HCK, LYN, and SRC; these interactions activate the Src family kinases. Interacts with MAP3K5; this interaction inhibits the Fas and TNFR-mediated death signals. Interacts with beta-COP and PTE1. Interacts with human RACK1; this increases Nef phosphorylation by PKC. Interacts with TP53; this interaction decreases the half-life of TP53, protecting the infected cell against p53-mediated apoptosis. Post-translationally, the virion-associated Nef proteins are cleaved by the viral protease to release the soluble C-terminal core protein. Nef is probably cleaved concomitantly with viral structural proteins on maturation of virus particles. In terms of processing, myristoylated. Phosphorylated on serine residues, probably by host PKCdelta and theta.

It is found in the host cell membrane. It localises to the virion. The protein resides in the secreted. Its subcellular location is the host Golgi apparatus membrane. In terms of biological role, factor of infectivity and pathogenicity, required for optimal virus replication. Alters numerous pathways of T-lymphocyte function and down-regulates immunity surface molecules in order to evade host defense and increase viral infectivity. Alters the functionality of other immunity cells, like dendritic cells, monocytes/macrophages and NK cells. Its function is as follows. In infected CD4(+) T-lymphocytes, down-regulates the surface MHC-I, mature MHC-II, CD4, CD28, CCR5 and CXCR4 molecules. Mediates internalization and degradation of host CD4 through the interaction of with the cytoplasmic tail of CD4, the recruitment of AP-2 (clathrin adapter protein complex 2), internalization through clathrin coated pits, and subsequent transport to endosomes and lysosomes for degradation. Diverts host MHC-I molecules to the trans-Golgi network-associated endosomal compartments by an endocytic pathway to finally target them for degradation. MHC-I down-regulation may involve AP-1 (clathrin adapter protein complex 1) or possibly Src family kinase-ZAP70/Syk-PI3K cascade recruited by PACS2. In consequence infected cells are masked for immune recognition by cytotoxic T-lymphocytes. Decreasing the number of immune receptors also prevents reinfection by more HIV particles (superinfection). Down-regulates host SERINC3 and SERINC5 thereby excluding these proteins from the viral particles. Virion infectivity is drastically higher when SERINC3 or SERINC5 are excluded from the viral envelope, because these host antiviral proteins impair the membrane fusion event necessary for subsequent virion penetration. Functionally, bypasses host T-cell signaling by inducing a transcriptional program nearly identical to that of anti-CD3 cell activation. Interaction with TCR-zeta chain up-regulates the Fas ligand (FasL). Increasing surface FasL molecules and decreasing surface MHC-I molecules on infected CD4(+) cells send attacking cytotoxic CD8+ T-lymphocytes into apoptosis. Plays a role in optimizing the host cell environment for viral replication without causing cell death by apoptosis. Protects the infected cells from apoptosis in order to keep them alive until the next virus generation is ready to strike. Inhibits the Fas and TNFR-mediated death signals by blocking MAP3K5/ASK1. Decreases the half-life of TP53, protecting the infected cell against p53-mediated apoptosis. Inhibits the apoptotic signals regulated by the Bcl-2 family proteins through the formation of a Nef/PI3-kinase/PAK2 complex that leads to activation of PAK2 and induces phosphorylation of host BAD. In terms of biological role, extracellular Nef protein targets CD4(+) T-lymphocytes for apoptosis by interacting with CXCR4 surface receptors. The polypeptide is Protein Nef (Homo sapiens (Human)).